A 200-amino-acid polypeptide reads, in one-letter code: Ras-related protein RABF2b (200 aa).

17–25 provides a ligand contact to GTP; that stretch reads GDVGAGKSS. Positions 39 to 47 match the Effector region motif; the sequence is QESTIGAAF. GTP-binding positions include 65–69, 123–126, and 153–154; these read DTAGQ, NKSD, and SA. 2 S-geranylgeranyl cysteine lipidation sites follow: cysteine 198 and cysteine 199.

It belongs to the small GTPase superfamily. Rab family. In terms of assembly, interacts with VPS9A homodimer. Interacts with TCTP1. Interacts with MON1. Interacts with EREX (via PX domain). Binds to VPS3. As to expression, expressed in roots and actively dividing cells.

It is found in the early endosome membrane. It localises to the endosome membrane. The protein resides in the prevacuolar compartment membrane. The protein localises to the endosome. Its subcellular location is the multivesicular body membrane. It is found in the cell membrane. It localises to the cytoplasm. Its activity is regulated as follows. Regulated by guanine nucleotide exchange factors (GEFs) which promote the exchange of bound GDP for free GTP. In terms of biological role, endosomal protein that may be involved in endocytosis. Involved in the trafficking of proteins from prevacuolar compartments (PVCs) to vacuoles. May activate the MON1-CCZ1 complex which acts as guanine nucleotide exchange factors (GEF) for Rab7 protein family, and serves as a link between Rab5 and Rab7 families in PVCs, and mediates PVC maturation. Involved in vacuolar transport of storage proteins with EREX as effector. Regulates membrane trafficking to protein storage vacuoles (PSVs). In Arabidopsis thaliana (Mouse-ear cress), this protein is Ras-related protein RABF2b.